Consider the following 145-residue polypeptide: Aklanonic acid methyl ester cyclase DnrD (145 aa).

Residue Gln106 participates in substrate binding.

Belongs to the polyketide cyclase DnrD family. As to quaternary structure, homotetramer.

The enzyme catalyses methyl aklanonate = aklaviketone. It participates in antibiotic biosynthesis; daunorubicin biosynthesis. It functions in the pathway antibiotic biosynthesis; carminomycin biosynthesis. The protein operates within antibiotic biosynthesis; rhodomycin biosynthesis. Its pathway is antibiotic biosynthesis; aclacinomycin biosynthesis. Its function is as follows. Involved in the biosynthesis of aklavinone which is an important precursor common to the formation of the clinically significant anthracyclines such as carminomycin, daunorubicin (daunomycin), rhodomycin, aclacinomycin T (aklavin) and aclacinomycin A (aclarubicin). These compounds are aromatic polyketide antibiotics that exhibit high cytotoxicity and are widely applied in the chemotherapy of a variety of cancers. Catalyzes the cyclization of aklanonic acid methyl ester to yield aklaviketone presumably via an intramolecular aldol condensation mechanism, although water is not eliminated. This chain is Aklanonic acid methyl ester cyclase DnrD (dnrD), found in Streptomyces peucetius.